The sequence spans 151 residues: Meiotically up-regulated gene 114 protein (151 aa).

It localises to the cytoplasm. Has a role in meiosis. This Schizosaccharomyces pombe (strain 972 / ATCC 24843) (Fission yeast) protein is Meiotically up-regulated gene 114 protein (mug114).